An 89-amino-acid chain; its full sequence is Small ribosomal subunit protein uS15 (89 aa).

Belongs to the universal ribosomal protein uS15 family. As to quaternary structure, part of the 30S ribosomal subunit. Forms a bridge to the 50S subunit in the 70S ribosome, contacting the 23S rRNA.

Functionally, one of the primary rRNA binding proteins, it binds directly to 16S rRNA where it helps nucleate assembly of the platform of the 30S subunit by binding and bridging several RNA helices of the 16S rRNA. In terms of biological role, forms an intersubunit bridge (bridge B4) with the 23S rRNA of the 50S subunit in the ribosome. This Cupriavidus necator (strain ATCC 17699 / DSM 428 / KCTC 22496 / NCIMB 10442 / H16 / Stanier 337) (Ralstonia eutropha) protein is Small ribosomal subunit protein uS15.